The chain runs to 302 residues: Glutamyl-Q tRNA(Asp) synthetase (302 aa).

L-glutamate-binding positions include 13–17 (RFAPS) and Asp49. Positions 16–26 (PSPTGPLHLGS) match the 'HIGH' region motif. Cys105, Cys107, Tyr119, and Cys123 together coordinate Zn(2+). L-glutamate contacts are provided by Tyr178 and Arg196. Residues 234–238 (KLSKQ) carry the 'KMSKS' region motif. Lys237 contributes to the ATP binding site.

It belongs to the class-I aminoacyl-tRNA synthetase family. GluQ subfamily. Zn(2+) is required as a cofactor.

In terms of biological role, catalyzes the tRNA-independent activation of glutamate in presence of ATP and the subsequent transfer of glutamate onto a tRNA(Asp). Glutamate is transferred on the 2-amino-5-(4,5-dihydroxy-2-cyclopenten-1-yl) moiety of the queuosine in the wobble position of the QUC anticodon. This Methylococcus capsulatus (strain ATCC 33009 / NCIMB 11132 / Bath) protein is Glutamyl-Q tRNA(Asp) synthetase.